The sequence spans 340 residues: NAD kinase (340 aa).

Asp66 acts as the Proton acceptor in catalysis. Residues 66-67, Arg71, 141-142, Lys152, Asp171, 182-187, and Ala206 each bind NAD(+); these read DG, ND, and TAYAFS. The segment at 321 to 340 is disordered; sequence AGVAGTEPDKPGERDGKAGS. The span at 327 to 340 shows a compositional bias: basic and acidic residues; it reads EPDKPGERDGKAGS.

It belongs to the NAD kinase family. The cofactor is a divalent metal cation.

It localises to the cytoplasm. It carries out the reaction NAD(+) + ATP = ADP + NADP(+) + H(+). Involved in the regulation of the intracellular balance of NAD and NADP, and is a key enzyme in the biosynthesis of NADP. Catalyzes specifically the phosphorylation on 2'-hydroxyl of the adenosine moiety of NAD to yield NADP. The protein is NAD kinase of Bifidobacterium longum (strain DJO10A).